Here is a 155-residue protein sequence, read N- to C-terminus: Nucleosome assembly protein 1-like 5 (155 aa).

The segment covering 1–16 has biased composition (basic and acidic residues); the sequence is MADPEKQGPAESRAED. Residues 1 to 60 form a disordered region; sequence MADPEKQGPAESRAEDEVMEGAQGGEDAATGDSATAPAAEEPQAPAENAPKPKNDFIESL. Positions 27 to 49 are enriched in low complexity; that stretch reads DAATGDSATAPAAEEPQAPAENA. Positions 68 to 94 form a coiled coil; sequence VLALKKLQKRCDKIEAKFDKEFQALEK. Residues 119 to 155 are disordered; the sequence is WTLEGEDDEDDEEEEDEEEEEEEAAAGATGGPDSAEK. Residues 122-142 show a composition bias toward acidic residues; the sequence is EGEDDEDDEEEEDEEEEEEEA.

It belongs to the nucleosome assembly protein (NAP) family.

Its subcellular location is the nucleus. This is Nucleosome assembly protein 1-like 5 (Nap1l5) from Rattus norvegicus (Rat).